We begin with the raw amino-acid sequence, 507 residues long: Congo red hypersensitive protein 1 (507 aa).

The signal sequence occupies residues 1–22; sequence MKVLDLLTVLSASSLLSTFAAA. The GH16 domain maps to 34 to 260; the sequence is ASSTASCNPL…KVIVTDYSTG (227 aa). A disulfide bridge links Cys-40 with Cys-48. An N-linked (GlcNAc...) asparagine glycan is attached at Asn-117. Glu-134 serves as the catalytic Nucleophile. Residue Glu-138 is the Proton donor of the active site. Glu-138 provides a ligand contact to chitin. N-linked (GlcNAc...) asparagine glycans are attached at residues Asn-177 and Asn-201. The chitin site is built by Trp-219 and Thr-230. 2 disordered regions span residues 329 to 368 and 381 to 478; these read SSSASSTVSSSVSSTVSSSSSVSSSSSTSPSSSTATSSKT and SSFE…TNSV. 2 stretches are compositionally biased toward low complexity: residues 381–439 and 451–477; these read SSFE…PVQD and TSSTTQISSKYTSTIQSSSSEASSTNS. Asn-482 is lipidated: GPI-anchor amidated asparagine. The propeptide at 483 to 507 is removed in mature form; that stretch reads GADLAQSLPREGKLFSVLVALLALL.

This sequence belongs to the glycosyl hydrolase 16 family. CRH1 subfamily. In terms of processing, the GPI-anchor is attached to the protein in the endoplasmic reticulum and serves to target the protein to the cell surface. There, the glucosamine-inositol phospholipid moiety is cleaved off and the GPI-modified mannoprotein is covalently attached via its lipidless GPI glycan remnant to the 1,6-beta-glucan of the outer cell wall layer.

It is found in the secreted. The protein localises to the cell wall. It localises to the membrane. The catalysed reaction is Random endo-hydrolysis of N-acetyl-beta-D-glucosaminide (1-&gt;4)-beta-linkages in chitin and chitodextrins.. Its function is as follows. Dual chitinase/transglycosylase that plays a role in cell wall architecture. Chitinase and transglycosylase activities are coupled. Required for the polysaccharide cross-linking at the septa and the cell wall. More specifically, transfers chitin to both beta(1-3)- and beta(1-6)glucan in the cell wall. The minimal number of intact hexopyranose units required in the molecule of the acceptor oligosaccharide is two and the effectivity of the acceptor increased with the increasing length of its oligosaccharide chain. This Saccharomyces cerevisiae (strain ATCC 204508 / S288c) (Baker's yeast) protein is Congo red hypersensitive protein 1.